The primary structure comprises 760 residues: Xaa-Pro dipeptidyl-peptidase (760 aa).

Residues Ser349, Asp469, and His499 each act as charge relay system in the active site.

This sequence belongs to the peptidase S15 family. In terms of assembly, homodimer.

Its subcellular location is the cytoplasm. The catalysed reaction is Hydrolyzes Xaa-Pro-|- bonds to release unblocked, N-terminal dipeptides from substrates including Ala-Pro-|-p-nitroanilide and (sequentially) Tyr-Pro-|-Phe-Pro-|-Gly-Pro-|-Ile.. Its function is as follows. Removes N-terminal dipeptides sequentially from polypeptides having unsubstituted N-termini provided that the penultimate residue is proline. This Streptococcus pyogenes serotype M6 (strain ATCC BAA-946 / MGAS10394) protein is Xaa-Pro dipeptidyl-peptidase.